Here is a 290-residue protein sequence, read N- to C-terminus: MPGMRDIKRRIRSIKSTQQITKAMKMVAAAKLRKAQEKVIQARPYAKRIQGVLSRLVAAASDVNHPLLTTREVKRVGYVVITADRGLCGGYNANIIRKVNNEIKGRDDVSLVCVGRKSRDFFKRMGKRIEADYVGLGEDISFGMAKEIAAKVMELYEQGTVDQVQLVFTEFYSALTQKPVQMQLLPIPAQAGESANSAKDSKGPQPLYAFEPSPEAVLDELLPKYVENQIYRALLESKASEQGARMTAMGSATDNAKEMINKLTLSFNRARQAAITKEISEVVGGAAALG.

This sequence belongs to the ATPase gamma chain family. As to quaternary structure, F-type ATPases have 2 components, CF(1) - the catalytic core - and CF(0) - the membrane proton channel. CF(1) has five subunits: alpha(3), beta(3), gamma(1), delta(1), epsilon(1). CF(0) has three main subunits: a, b and c.

It localises to the cell membrane. Its function is as follows. Produces ATP from ADP in the presence of a proton gradient across the membrane. The gamma chain is believed to be important in regulating ATPase activity and the flow of protons through the CF(0) complex. This chain is ATP synthase gamma chain, found in Heliobacterium modesticaldum (strain ATCC 51547 / Ice1).